The sequence spans 241 residues: Probable transcriptional regulatory protein Maqu_2154 (241 aa).

This sequence belongs to the TACO1 family.

It localises to the cytoplasm. This chain is Probable transcriptional regulatory protein Maqu_2154, found in Marinobacter nauticus (strain ATCC 700491 / DSM 11845 / VT8) (Marinobacter aquaeolei).